The sequence spans 238 residues: Large ribosomal subunit protein uL2 (238 aa).

The interval 198–238 (HPHGGGLHQSVSRPSTVSRNAPPGRKVGHIASRRTGRRGGA) is disordered. The segment covering 206 to 216 (QSVSRPSTVSR) has biased composition (polar residues). A compositionally biased stretch (basic residues) spans 223-238 (KVGHIASRRTGRRGGA).

It belongs to the universal ribosomal protein uL2 family. In terms of assembly, part of the 50S ribosomal subunit. Forms a bridge to the 30S subunit in the 70S ribosome.

One of the primary rRNA binding proteins. Required for association of the 30S and 50S subunits to form the 70S ribosome, for tRNA binding and peptide bond formation. It has been suggested to have peptidyltransferase activity; this is somewhat controversial. Makes several contacts with the 16S rRNA in the 70S ribosome. This chain is Large ribosomal subunit protein uL2, found in Sulfolobus acidocaldarius (strain ATCC 33909 / DSM 639 / JCM 8929 / NBRC 15157 / NCIMB 11770).